Consider the following 198-residue polypeptide: Pyridoxine/pyridoxamine 5'-phosphate oxidase 2 (198 aa).

FMN contacts are provided by residues arginine 42, 59–60, lysine 66, and 121–122; these read NT and RS.

It belongs to the pyridoxamine 5'-phosphate oxidase family. As to quaternary structure, homodimer. FMN is required as a cofactor.

The catalysed reaction is pyridoxamine 5'-phosphate + O2 + H2O = pyridoxal 5'-phosphate + H2O2 + NH4(+). It catalyses the reaction pyridoxine 5'-phosphate + O2 = pyridoxal 5'-phosphate + H2O2. The protein operates within cofactor metabolism; pyridoxal 5'-phosphate salvage; pyridoxal 5'-phosphate from pyridoxamine 5'-phosphate: step 1/1. Its pathway is cofactor metabolism; pyridoxal 5'-phosphate salvage; pyridoxal 5'-phosphate from pyridoxine 5'-phosphate: step 1/1. Its function is as follows. Catalyzes the oxidation of either pyridoxine 5'-phosphate (PNP) or pyridoxamine 5'-phosphate (PMP) into pyridoxal 5'-phosphate (PLP). Has an in vitro catalytic efficiency for PNP approximately 300-fold lower than that of PPOX1. The chain is Pyridoxine/pyridoxamine 5'-phosphate oxidase 2 (PPOX2) from Arabidopsis thaliana (Mouse-ear cress).